A 156-amino-acid polypeptide reads, in one-letter code: Small ribosomal subunit protein uS7 (156 aa).

It belongs to the universal ribosomal protein uS7 family. In terms of assembly, part of the 30S ribosomal subunit. Contacts proteins S9 and S11.

In terms of biological role, one of the primary rRNA binding proteins, it binds directly to 16S rRNA where it nucleates assembly of the head domain of the 30S subunit. Is located at the subunit interface close to the decoding center, probably blocks exit of the E-site tRNA. In Shouchella clausii (strain KSM-K16) (Alkalihalobacillus clausii), this protein is Small ribosomal subunit protein uS7.